We begin with the raw amino-acid sequence, 387 residues long: Protein adenylyltransferase VopS (387 aa).

ATP contacts are provided by residues 76–77 (IT), 122–124 (LDS), 353–355 (GNG), and Arg359. Residues 278 to 387 (LNMDNLKELH…NAENSLHGIK (110 aa)) form the Fido domain.

The protein localises to the secreted. It carries out the reaction L-tyrosyl-[protein] + ATP = O-(5'-adenylyl)-L-tyrosyl-[protein] + diphosphate. The enzyme catalyses L-threonyl-[protein] + ATP = 3-O-(5'-adenylyl)-L-threonyl-[protein] + diphosphate. Its function is as follows. Adenylyltransferase involved in virulence by mediating the addition of adenosine 5'-monophosphate (AMP) to specific threonine residue of host Rho GTPases RhoA, Rac and Cdc42. The resulting AMPylation prevents the interaction of Rho GTPases with downstream effectors, thereby inhibiting actin assembly in infected cells. The polypeptide is Protein adenylyltransferase VopS (vopS) (Vibrio parahaemolyticus serotype O3:K6 (strain RIMD 2210633)).